Here is a 170-residue protein sequence, read N- to C-terminus: Pollen-specific protein C13 (170 aa).

Residues 1–27 (MASVPAPATTTAAVILCLCVVLSCAAA) form the signal peptide. Intrachain disulfides connect cysteine 43-cysteine 114, cysteine 46-cysteine 155, and cysteine 67-cysteine 102. A glycan (N-linked (GlcNAc...) asparagine) is linked at asparagine 53.

This sequence belongs to the Ole e I family. In terms of tissue distribution, pollen.

The protein is Pollen-specific protein C13 (MGS1) of Zea mays (Maize).